The primary structure comprises 95 residues: Aspartyl/glutamyl-tRNA(Asn/Gln) amidotransferase subunit C (95 aa).

The protein belongs to the GatC family. As to quaternary structure, heterotrimer of A, B and C subunits.

The catalysed reaction is L-glutamyl-tRNA(Gln) + L-glutamine + ATP + H2O = L-glutaminyl-tRNA(Gln) + L-glutamate + ADP + phosphate + H(+). The enzyme catalyses L-aspartyl-tRNA(Asn) + L-glutamine + ATP + H2O = L-asparaginyl-tRNA(Asn) + L-glutamate + ADP + phosphate + 2 H(+). Functionally, allows the formation of correctly charged Asn-tRNA(Asn) or Gln-tRNA(Gln) through the transamidation of misacylated Asp-tRNA(Asn) or Glu-tRNA(Gln) in organisms which lack either or both of asparaginyl-tRNA or glutaminyl-tRNA synthetases. The reaction takes place in the presence of glutamine and ATP through an activated phospho-Asp-tRNA(Asn) or phospho-Glu-tRNA(Gln). The chain is Aspartyl/glutamyl-tRNA(Asn/Gln) amidotransferase subunit C from Chlorobium phaeobacteroides (strain DSM 266 / SMG 266 / 2430).